The sequence spans 291 residues: Small ribosomal subunit biogenesis GTPase RsgA (291 aa).

In terms of domain architecture, CP-type G spans 63–221; that stretch reads HNELKRPPVS…IADTPGFSAL (159 aa). GTP contacts are provided by residues 112–115 and 164–172; these read TKKD and GQSGVGKST. 4 residues coordinate Zn(2+): Cys-245, Cys-250, His-252, and Cys-258.

The protein belongs to the TRAFAC class YlqF/YawG GTPase family. RsgA subfamily. Monomer. Associates with 30S ribosomal subunit, binds 16S rRNA. The cofactor is Zn(2+).

The protein resides in the cytoplasm. One of several proteins that assist in the late maturation steps of the functional core of the 30S ribosomal subunit. Helps release RbfA from mature subunits. May play a role in the assembly of ribosomal proteins into the subunit. Circularly permuted GTPase that catalyzes slow GTP hydrolysis, GTPase activity is stimulated by the 30S ribosomal subunit. The sequence is that of Small ribosomal subunit biogenesis GTPase RsgA from Staphylococcus haemolyticus (strain JCSC1435).